A 593-amino-acid chain; its full sequence is Probable ubiquitin carboxyl-terminal hydrolase 4 (593 aa).

The USP domain occupies 227–573 (IGLTNLGNTC…SSYILFYKRS (347 aa)). Catalysis depends on Cys236, which acts as the Nucleophile. Phosphoserine is present on residues Ser338 and Ser343. His530 serves as the catalytic Proton acceptor.

Belongs to the peptidase C19 family. In terms of assembly, interacts with sfp47.

Its subcellular location is the cytoplasm. It is found in the endosome. The enzyme catalyses Thiol-dependent hydrolysis of ester, thioester, amide, peptide and isopeptide bonds formed by the C-terminal Gly of ubiquitin (a 76-residue protein attached to proteins as an intracellular targeting signal).. Its function is as follows. Has an ATP-independent isopeptidase activity, cleaving at the C-terminus of the ubiquitin moiety. Acts late in the proteolytic pathway in conjunction with the 26S proteasome. Plays a role in avoiding DNA overreplication. The chain is Probable ubiquitin carboxyl-terminal hydrolase 4 (ubp4) from Schizosaccharomyces pombe (strain 972 / ATCC 24843) (Fission yeast).